We begin with the raw amino-acid sequence, 575 residues long: Transcription factor COE2 (575 aa).

Positions 62 to 65 (RKSN) are interaction with DNA. The segment at 150–169 (CRVLLTHEVMCSRCCEKKSC) adopts a C5-type zinc-finger fold. Interaction with DNA regions lie at residues 196–203 (NCLKTAGN) and 235–238 (NNSK). The region spanning 253 to 336 (PCIKAISPSE…KGAPGRFIYT (84 aa)) is the IPT/TIG domain. A compositionally biased stretch (polar residues) spans 441-453 (STQGNNQGYIRNT). The disordered stretch occupies residues 441-479 (STQGNNQGYIRNTSSISPRGYSSSSTPQQSNYSTSSNSM). Positions 454 to 479 (SSISPRGYSSSSTPQQSNYSTSSNSM) are enriched in low complexity.

Belongs to the COE family. In terms of assembly, forms either a homodimer or a heterodimer with a related family member. Interacts with SIX1.

It localises to the nucleus. Transcription factor that, in osteoblasts, activates the decoy receptor for RANKL, TNFRSF11B, which in turn regulates osteoclast differentiation. Acts in synergy with the Wnt-responsive LEF1/CTNNB1 pathway. Recognizes variations of the palindromic sequence 5'-ATTCCCNNGGGAATT-3'. The sequence is that of Transcription factor COE2 (EBF2) from Homo sapiens (Human).